A 279-amino-acid polypeptide reads, in one-letter code: 4-diphosphocytidyl-2-C-methyl-D-erythritol kinase (279 aa).

Residue Lys-11 is part of the active site. Pro-95 to Ser-105 serves as a coordination point for ATP. Residue Asp-137 is part of the active site.

This sequence belongs to the GHMP kinase family. IspE subfamily.

The enzyme catalyses 4-CDP-2-C-methyl-D-erythritol + ATP = 4-CDP-2-C-methyl-D-erythritol 2-phosphate + ADP + H(+). It participates in isoprenoid biosynthesis; isopentenyl diphosphate biosynthesis via DXP pathway; isopentenyl diphosphate from 1-deoxy-D-xylulose 5-phosphate: step 3/6. In terms of biological role, catalyzes the phosphorylation of the position 2 hydroxy group of 4-diphosphocytidyl-2C-methyl-D-erythritol. The chain is 4-diphosphocytidyl-2-C-methyl-D-erythritol kinase from Geotalea daltonii (strain DSM 22248 / JCM 15807 / FRC-32) (Geobacter daltonii).